A 305-amino-acid polypeptide reads, in one-letter code: Glycine--tRNA ligase alpha subunit (305 aa).

It belongs to the class-II aminoacyl-tRNA synthetase family. In terms of assembly, tetramer of two alpha and two beta subunits.

It is found in the cytoplasm. The enzyme catalyses tRNA(Gly) + glycine + ATP = glycyl-tRNA(Gly) + AMP + diphosphate. The polypeptide is Glycine--tRNA ligase alpha subunit (Streptococcus pyogenes serotype M4 (strain MGAS10750)).